A 574-amino-acid chain; its full sequence is MSSGLILLIVAIVLLVIIAYLVGVIIRKRNDTLITSLEERKQALFGLPVNDEIEEVKSLHLIGQSQTSFREWNQKWVDLTLNTFTDIEKHIFEAEHLNDTFNFIRAKHEINSVESQLNLVEEDITAIREALGILKEQEEKNSARVTHALDLYEKLQASVAENEDNFGSTMAEIEKQMKNIEAEFSQFVALNSSGDPVEAAEVLDKAEEHTIALGQITEQIPAIVAKLEDDFPDQLDDLETGYRRLLEENYHFPEKNIEARFQEIRESIRANSSELVTLDLDRARDENTHIQERIDSLYELFEREIAAYKVVAKNSKILPRYLAHAKHNNEQLKHEIARLSRKYILSENEGLNIKAFDKDLKDIEDNVLEIAEAFDQQEKPFSELQLILDRSIKTLASVESGQMDVFAAVKDIEKIESQARQHLEIYVTQLHMIKRYMEKRNLPGIPQDFLSTFFTTSSQLEALMDELSRGRINIEAVSRLSEVATAAIANLEELTYQVVQHATLTEQLLQYSNRYRSFEAGVQNSFEHALKLFEVDNDYQASFDEISYALETVEPGVTERFVNSYEKTRERIRF.

Topologically, residues 1–7 are extracellular; that stretch reads MSSGLIL. A helical transmembrane segment spans residues 8–26; it reads LIVAIVLLVIIAYLVGVII. The Cytoplasmic segment spans residues 27 to 574; sequence RKRNDTLITS…YEKTRERIRF (548 aa). Coiled coils occupy residues 102 to 131, 161 to 190, 276 to 379, and 459 to 493; these read NFIRAKHEINSVESQLNLVEEDITAIREAL, ENEDNFGSTMAEIEKQMKNIEAEFSQFVAL, VTLD…QQEK, and QLEALMDELSRGRINIEAVSRLSEVATAAIANLEE.

Belongs to the EzrA family.

The protein resides in the cell membrane. In terms of biological role, negative regulator of FtsZ ring formation; modulates the frequency and position of FtsZ ring formation. Inhibits FtsZ ring formation at polar sites. Interacts either with FtsZ or with one of its binding partners to promote depolymerization. This is Septation ring formation regulator EzrA from Streptococcus equi subsp. zooepidemicus (strain MGCS10565).